The primary structure comprises 438 residues: MKYFILSLGCTKNQADSEVIMGILESKGYVRSLNPEESDLLIVNTCGFIAAAIEESIEEILNLVHLKKPGQKILVAGCLVQREGKELAKHLPEVDLFFTPREINNLDKLLADLGENNKLVLSEPGFLNLEKKPRAKSNEVYRYIKIADGCDNRCTYCTIPAIRGKYTSRPLDDILEEIKDTLKQGIKEIILVAQDTTAYGIDLYGEFKLVELLRKIGSIKGNFWVRLMYLYPDKITPELINEIKENPKVIKYVDVPLQHIHPEILKKMGRKGSSEEIISTLERLRKEIPDITIRTTFIVGFPGETEEQFNYLLDFVKKFKFNRLGAFPYYREKGTPAAKMKGQIPKKVKEQRYEKLMEVQQEISLNLNKALVGKKIPVIVEKKIRGENLYLGRTYMDAPEIDGIIEIKAEKRLKKGQIINVLITDYDIYDLKGEFIND.

Positions Met-1–Glu-115 constitute an MTTase N-terminal domain. Residues Cys-10, Cys-46, Cys-78, Cys-150, Cys-154, and Cys-157 each coordinate [4Fe-4S] cluster. The region spanning Lys-136–Asn-366 is the Radical SAM core domain. Residues Lys-369 to Asn-437 enclose the TRAM domain.

It belongs to the methylthiotransferase family. RimO subfamily. Requires [4Fe-4S] cluster as cofactor.

Its subcellular location is the cytoplasm. The catalysed reaction is L-aspartate(89)-[ribosomal protein uS12]-hydrogen + (sulfur carrier)-SH + AH2 + 2 S-adenosyl-L-methionine = 3-methylsulfanyl-L-aspartate(89)-[ribosomal protein uS12]-hydrogen + (sulfur carrier)-H + 5'-deoxyadenosine + L-methionine + A + S-adenosyl-L-homocysteine + 2 H(+). Functionally, catalyzes the methylthiolation of an aspartic acid residue of ribosomal protein uS12. The chain is Ribosomal protein uS12 methylthiotransferase RimO from Carboxydothermus hydrogenoformans (strain ATCC BAA-161 / DSM 6008 / Z-2901).